We begin with the raw amino-acid sequence, 543 residues long: CTP synthase (543 aa).

The amidoligase domain stretch occupies residues 1 to 265 (MTRYIFVTGG…DDFVVERFGL (265 aa)). Residue S13 coordinates CTP. S13 contributes to the UTP binding site. ATP-binding positions include 14–19 (SLGKGI) and D71. Residues D71 and E139 each coordinate Mg(2+). Residues 146-148 (DIE), 186-191 (KTKPTQ), and K222 contribute to the CTP site. UTP contacts are provided by residues 186–191 (KTKPTQ) and K222. The 252-residue stretch at 290–541 (TIAMVGKYME…VKAALAQHQK (252 aa)) folds into the Glutamine amidotransferase type-1 domain. G351 serves as a coordination point for L-glutamine. The active-site Nucleophile; for glutamine hydrolysis is the C378. Residues 379–382 (LGMQ), E402, and R469 contribute to the L-glutamine site. Active-site residues include H514 and E516.

Belongs to the CTP synthase family. As to quaternary structure, homotetramer.

The enzyme catalyses UTP + L-glutamine + ATP + H2O = CTP + L-glutamate + ADP + phosphate + 2 H(+). It catalyses the reaction L-glutamine + H2O = L-glutamate + NH4(+). The catalysed reaction is UTP + NH4(+) + ATP = CTP + ADP + phosphate + 2 H(+). It participates in pyrimidine metabolism; CTP biosynthesis via de novo pathway; CTP from UDP: step 2/2. Its activity is regulated as follows. Allosterically activated by GTP, when glutamine is the substrate; GTP has no effect on the reaction when ammonia is the substrate. The allosteric effector GTP functions by stabilizing the protein conformation that binds the tetrahedral intermediate(s) formed during glutamine hydrolysis. Inhibited by the product CTP, via allosteric rather than competitive inhibition. Catalyzes the ATP-dependent amination of UTP to CTP with either L-glutamine or ammonia as the source of nitrogen. Regulates intracellular CTP levels through interactions with the four ribonucleotide triphosphates. In Pseudomonas fluorescens (strain Pf0-1), this protein is CTP synthase.